The chain runs to 133 residues: Profilin (133 aa).

Belongs to the profilin family.

More likely to influence phosphoinositide metabolism than actin assembly. This Cowpox virus (strain GRI-90 / Grishak) (CPV) protein is Profilin.